Here is a 460-residue protein sequence, read N- to C-terminus: MAAATMSWDDGKHMKVKRVQITYEDVINSIEAEYDGDTHNPHHHGTPGKKSDGVSLSPDEYITDVTGYYKTTGAEDAIAALAFKTNKTEYGPYGNKTRNQFSIHAPKDNQIAGFQGISSNVLNSIDVHFAPLPSSSSSSSSLSQANKVDAQGGKGGTSWDDGAHDHVRRVYIGQGDSGVTYVKFEYEKDDKKESREHGKKTLLGAEVFEVDPDDYITSVEVQSDRIFGQDTEVITSLIFKTSKGKFSPPFGLEGSQKYELKDKNGGKLVGFHGRVGGELLNALGAYFAPSSGRGTPSATQPPGSAQPTGSAGAKKLEAKGGNVGNPWDDGPHEGVRKVYIGQGDSGVSYVKFVYDKDSKEVPGNDHGKRTLLAPEEFLLEYPNEYITSVELNYDKIFGTEGEIITMLRFTTNKRTSPPFGLEGAKSVLLKEDGHKIVGFHGKAGADIIHQVGVHVKPISK.

The 131-residue stretch at M1–P131 folds into the Jacalin-type lectin 1 domain. A2 bears the N-acetylalanine mark. Disordered stretches follow at residues Y34–S57, P133–G162, and S291–G334. Positions P133 to S143 are enriched in low complexity. The Jacalin-type lectin 2 domain occupies A145–P289. The span at G292 to G309 shows a compositional bias: polar residues. A Jacalin-type lectin 3 domain is found at A313–P457.

It belongs to the jacalin lectin family.

The polypeptide is Jacalin-related lectin 36 (JAL36) (Arabidopsis thaliana (Mouse-ear cress)).